A 374-amino-acid polypeptide reads, in one-letter code: tRNA-specific 2-thiouridylase MnmA (374 aa).

ATP contacts are provided by residues 17–24 (GMSGGVDS) and M43. The tract at residues 103 to 105 (NPD) is interaction with target base in tRNA. C108 (nucleophile) is an active-site residue. A disulfide bridge connects residues C108 and C204. G132 contributes to the ATP binding site. The interval 154-156 (KDQ) is interaction with tRNA. The active-site Cysteine persulfide intermediate is the C204. Residues 316 to 317 (RY) are interaction with tRNA.

Belongs to the MnmA/TRMU family.

The protein resides in the cytoplasm. The catalysed reaction is S-sulfanyl-L-cysteinyl-[protein] + uridine(34) in tRNA + AH2 + ATP = 2-thiouridine(34) in tRNA + L-cysteinyl-[protein] + A + AMP + diphosphate + H(+). Its function is as follows. Catalyzes the 2-thiolation of uridine at the wobble position (U34) of tRNA, leading to the formation of s(2)U34. This chain is tRNA-specific 2-thiouridylase MnmA, found in Pseudomonas entomophila (strain L48).